The following is a 110-amino-acid chain: Ig kappa chain V region 2717 (110 aa).

Residues 1–23 (VEVLTQTPSPVSAAVGGTVTISC) form a framework-1 region. Residues 24–36 (QSTKSIYBBBYLA) form a complementarity-determining-1 region. The interval 37–51 (WYQZKPGQPPKALIY) is framework-2. Residues 52–58 (TASSLAS) form a complementarity-determining-2 region. The segment at 59–90 (GVPSRFTGSGSGTZFTLTLSDVZCDDAATYYC) is framework-3. The interval 91-99 (GGADYTGYS) is complementarity-determining-3. The interval 100 to 109 (FGGGTEVVVK) is framework-4.

The protein is Ig kappa chain V region 2717 of Oryctolagus cuniculus (Rabbit).